We begin with the raw amino-acid sequence, 654 residues long: Spindle assembly abnormal protein 6 homolog (654 aa).

A PISA domain is found at 39 to 91; it reads VHRKDLVIRLTDDTDPFFLYNLVISEEDFQSLKLQQGLLVDFLAFPQKFIDLL. A coiled-coil region spans residues 175–471; it reads TRQLHITQET…QLLKNNEKLI (297 aa). Serine 509 bears the Phosphoserine mark. A disordered region spans residues 568–589; sequence ASIDGQPGAAVNRPCSNDKENG. Serine 612 is subject to Phosphoserine. Low complexity predominate over residues 634–644; it reads SKPTVLPSSSS. Residues 634-654 form a disordered region; it reads SKPTVLPSSSSAYFPGQLPSS. Serine 654 carries the phosphoserine modification.

In terms of assembly, nine homodimers form a cartwheel structure with an internal diameter of 23 nm and radial spokes connecting to the microtubule triplets. Forms a complex with CPAP and STIL. Interacts with FBXW5. Interacts with NUP62 and TUBG1 at the centrosome. Interacts with CENATAC; the interaction increases with CENATAC acetylation. Interacts with FZR1; the interaction is regulated by CENATAC and leads to SASS6 proteasomal degradation. In terms of processing, ubiquitinated by the SCF(FBXW5) E3 ubiquitin-protein ligase complex during S phase, leading to its degradation and preventing centriole reduplication. Ubiquitinated by the anaphase promoting complex/cyclosome (APC/C) E3 ubiquitin-protein ligase complex, leading to its degradation and preventing centriole reduplication.

It is found in the cytoplasm. Its subcellular location is the cytoskeleton. It localises to the microtubule organizing center. The protein localises to the centrosome. The protein resides in the centriole. Central scaffolding component of the centrioles ensuring their 9-fold symmetry. Required for centrosome biogenesis and duplication. Required both for mother-centriole-dependent centriole duplication and deuterosome-dependent centriole amplification in multiciliated cells. Not required for centriole formation in embryonic stem cells but necessary to maintain centriole architecture. Required for the recruitment of STIL to the procentriole and for STIL-mediated centriole amplification. In Mus musculus (Mouse), this protein is Spindle assembly abnormal protein 6 homolog.